A 380-amino-acid chain; its full sequence is Cytochrome b (380 aa).

Helical transmembrane passes span 34–54, 78–99, 114–134, and 179–199; these read FGSL…LLAM, WLIR…YLHI, WNTG…GYVL, and FFAL…IHLT. Residues H84 and H98 each coordinate heme b. Positions 183 and 197 each coordinate heme b. H202 is a binding site for a ubiquinone. 4 consecutive transmembrane segments (helical) span residues 227–247, 289–309, 321–341, and 348–368; these read LKDI…ALFS, LGGV…PFLH, LSQL…WVGS, and FIII…ILFP.

It belongs to the cytochrome b family. The cytochrome bc1 complex contains 11 subunits: 3 respiratory subunits (MT-CYB, CYC1 and UQCRFS1), 2 core proteins (UQCRC1 and UQCRC2) and 6 low-molecular weight proteins (UQCRH/QCR6, UQCRB/QCR7, UQCRQ/QCR8, UQCR10/QCR9, UQCR11/QCR10 and a cleavage product of UQCRFS1). This cytochrome bc1 complex then forms a dimer. Heme b serves as cofactor.

It localises to the mitochondrion inner membrane. In terms of biological role, component of the ubiquinol-cytochrome c reductase complex (complex III or cytochrome b-c1 complex) that is part of the mitochondrial respiratory chain. The b-c1 complex mediates electron transfer from ubiquinol to cytochrome c. Contributes to the generation of a proton gradient across the mitochondrial membrane that is then used for ATP synthesis. The sequence is that of Cytochrome b (MT-CYB) from Daption capense (Cape petrel).